Reading from the N-terminus, the 166-residue chain is 16S rRNA aminocarboxypropyltransferase (166 aa).

Positions 17, 62, 84, 99, and 103 each coordinate S-adenosyl-L-methionine.

It belongs to the TDD superfamily. TSR3 family.

The protein resides in the cytoplasm. It carries out the reaction an N(1)-methylpseudouridine in rRNA + S-adenosyl-L-methionine = N(1)-methyl-N(3)-[(3S)-3-amino-3-carboxypropyl]pseudouridine in rRNA + S-methyl-5'-thioadenosine + H(+). In terms of biological role, aminocarboxypropyltransferase that catalyzes the aminocarboxypropyl transfer on pseudouridine corresponding to position 914 in M.jannaschii 16S rRNA. It constitutes the last step in biosynthesis of the hypermodified N1-methyl-N3-(3-amino-3-carboxypropyl) pseudouridine (m1acp3-Psi). In Saccharolobus islandicus (strain Y.N.15.51 / Yellowstone #2) (Sulfolobus islandicus), this protein is 16S rRNA aminocarboxypropyltransferase.